Reading from the N-terminus, the 402-residue chain is Exodeoxyribonuclease 7 large subunit (402 aa).

The protein belongs to the XseA family. Heterooligomer composed of large and small subunits.

It is found in the cytoplasm. It catalyses the reaction Exonucleolytic cleavage in either 5'- to 3'- or 3'- to 5'-direction to yield nucleoside 5'-phosphates.. Bidirectionally degrades single-stranded DNA into large acid-insoluble oligonucleotides, which are then degraded further into small acid-soluble oligonucleotides. This chain is Exodeoxyribonuclease 7 large subunit, found in Streptomyces coelicolor (strain ATCC BAA-471 / A3(2) / M145).